A 1608-amino-acid chain; its full sequence is Hemolysin (1608 aa).

Residues 1-30 (MKNNNFRLSAAGKLAAALAIILAASAGAYA) form the signal peptide. 6 disordered regions span residues 296–315 (SRVD…QNYR), 452–488 (KSSE…LRSE), 716–737 (EHTR…LSGG), 971–1030 (AVNL…SASQ), 1168–1199 (AEST…TGGN), and 1437–1469 (PQQD…QGPL). Polar residues-rich tracts occupy residues 303–313 (SNKNGGDNYQN) and 460–474 (RNHT…WSNS). Basic and acidic residues-rich tracts occupy residues 478 to 488 (ESLKASELRSE) and 716 to 726 (EHTRDSEKTTR). Positions 727–736 (TENSASSLSG) are enriched in polar residues. Residues 977 to 996 (DSHRSEAAANRQDEQSRDTR) show a composition bias toward basic and acidic residues. Residues 1021 to 1030 (TQRSNSSASQ) are compositionally biased toward polar residues.

It is found in the cell outer membrane. Bacterial hemolysins are exotoxins that attack blood cell membranes and cause cell rupture by mechanisms not clearly defined. Functionally, cell-bound hemolysin, which releases heme-iron from erythrocytes by interaction with the erythrocyte membrane. ShlA requires ShlB function. This Serratia marcescens protein is Hemolysin (shlA).